Reading from the N-terminus, the 157-residue chain is Ubiquitin-like protein 4A (157 aa).

The 76-residue stretch at 1–76 folds into the Ubiquitin-like domain; sequence MQLTVKALQG…LNLVVKPLEK (76 aa). Lys48 is covalently cross-linked (Glycyl lysine isopeptide (Lys-Gly) (interchain with G-Cter in ubiquitin)). Residue Ser90 is modified to Phosphoserine. A required and sufficient for interaction with BAG6 region spans residues 96 to 138; sequence WQLISKVLARHFSVADASRVLEQLQRDYDRSLSRLTLDDIERL.

Component of the BAG6/BAT3 complex, at least composed of BAG6, UBL4A and GET4/TRC35. Interacts with BAG6; the interaction is direct and required for UBL4A protein stability. Interacts with USP13; may be indirect via BAG6. Post-translationally, polyubiquitinated. Ubiquitination by AMFR and deubiquitination by USP13 may regulate the interaction between the BAG6/BAT3 complex and SGTA and therefore may regulate client proteins fate.

The protein localises to the cytoplasm. It localises to the cytosol. The protein resides in the nucleus. As part of a cytosolic protein quality control complex, the BAG6/BAT3 complex, maintains misfolded and hydrophobic patches-containing proteins in a soluble state and participates in their proper delivery to the endoplasmic reticulum or alternatively can promote their sorting to the proteasome where they undergo degradation. The BAG6/BAT3 complex is involved in the post-translational delivery of tail-anchored/type II transmembrane proteins to the endoplasmic reticulum membrane. Recruited to ribosomes, it interacts with the transmembrane region of newly synthesized tail-anchored proteins and together with SGTA and ASNA1 mediates their delivery to the endoplasmic reticulum. Client proteins that cannot be properly delivered to the endoplasmic reticulum are ubiquitinated and sorted to the proteasome. Similarly, the BAG6/BAT3 complex also functions as a sorting platform for proteins of the secretory pathway that are mislocalized to the cytosol either delivering them to the proteasome for degradation or to the endoplasmic reticulum. The BAG6/BAT3 complex also plays a role in the endoplasmic reticulum-associated degradation (ERAD), a quality control mechanism that eliminates unwanted proteins of the endoplasmic reticulum through their retrotranslocation to the cytosol and their targeting to the proteasome. It maintains these retrotranslocated proteins in an unfolded yet soluble state condition in the cytosol to ensure their proper delivery to the proteasome. This Mus musculus (Mouse) protein is Ubiquitin-like protein 4A.